Here is a 223-residue protein sequence, read N- to C-terminus: Urease accessory protein UreF (223 aa).

This sequence belongs to the UreF family. In terms of assembly, ureD, UreF and UreG form a complex that acts as a GTP-hydrolysis-dependent molecular chaperone, activating the urease apoprotein by helping to assemble the nickel containing metallocenter of UreC. The UreE protein probably delivers the nickel.

Its subcellular location is the cytoplasm. In terms of biological role, required for maturation of urease via the functional incorporation of the urease nickel metallocenter. The sequence is that of Urease accessory protein UreF from Pseudomonas paraeruginosa (strain DSM 24068 / PA7) (Pseudomonas aeruginosa (strain PA7)).